A 141-amino-acid polypeptide reads, in one-letter code: Hemoglobin subunit alpha-A (141 aa).

Residues 1 to 141 (VLNAGDKANV…VGTVLTSKYR (141 aa)) enclose the Globin domain. Histidine 58 lines the O2 pocket. Heme b is bound at residue histidine 87.

The protein belongs to the globin family. Heterotetramer of two alpha chains and two beta chains. As to expression, red blood cells.

In terms of biological role, involved in oxygen transport from the lung to the various peripheral tissues. This Chrysemys picta bellii (Western painted turtle) protein is Hemoglobin subunit alpha-A (HBAA).